The primary structure comprises 1374 residues: DNA-directed RNA polymerase subunit beta' (1374 aa).

The interval Met-1–Phe-47 is disordered. Residues Lys-7–Ala-28 are compositionally biased toward basic residues. A compositionally biased stretch (low complexity) spans Ala-29–Pro-45. Positions 258, 325, 332, and 335 each coordinate Zn(2+). The interval Val-1343–Glu-1374 is disordered. Over residues Leu-1362–Glu-1374 the composition is skewed to low complexity.

This sequence belongs to the RNA polymerase beta' chain family. RpoC2 subfamily. As to quaternary structure, in cyanobacteria the RNAP catalytic core is composed of 2 alpha, 1 beta, 1 beta', 1 gamma and 1 omega subunit. When a sigma factor is associated with the core the holoenzyme is formed, which can initiate transcription. Zn(2+) is required as a cofactor.

The enzyme catalyses RNA(n) + a ribonucleoside 5'-triphosphate = RNA(n+1) + diphosphate. DNA-dependent RNA polymerase catalyzes the transcription of DNA into RNA using the four ribonucleoside triphosphates as substrates. The protein is DNA-directed RNA polymerase subunit beta' of Prochlorococcus marinus (strain MIT 9303).